The following is a 226-amino-acid chain: Leucyl/phenylalanyl-tRNA--protein transferase (226 aa).

The protein belongs to the L/F-transferase family.

The protein localises to the cytoplasm. The catalysed reaction is N-terminal L-lysyl-[protein] + L-leucyl-tRNA(Leu) = N-terminal L-leucyl-L-lysyl-[protein] + tRNA(Leu) + H(+). It carries out the reaction N-terminal L-arginyl-[protein] + L-leucyl-tRNA(Leu) = N-terminal L-leucyl-L-arginyl-[protein] + tRNA(Leu) + H(+). It catalyses the reaction L-phenylalanyl-tRNA(Phe) + an N-terminal L-alpha-aminoacyl-[protein] = an N-terminal L-phenylalanyl-L-alpha-aminoacyl-[protein] + tRNA(Phe). Functionally, functions in the N-end rule pathway of protein degradation where it conjugates Leu, Phe and, less efficiently, Met from aminoacyl-tRNAs to the N-termini of proteins containing an N-terminal arginine or lysine. The protein is Leucyl/phenylalanyl-tRNA--protein transferase of Bradyrhizobium diazoefficiens (strain JCM 10833 / BCRC 13528 / IAM 13628 / NBRC 14792 / USDA 110).